We begin with the raw amino-acid sequence, 215 residues long: Fibroblast growth factor 10 (215 aa).

Residues 1 to 36 (MWKWILTHCASAFPHLPGCCCCFLLLFLVSSVPVTC) form the signal peptide. A disordered region spans residues 49–73 (TNSSSSSSSSSSSSSFSSPSSAGRH). An N-linked (GlcNAc...) asparagine glycan is attached at Asn-50. The span at 51-69 (SSSSSSSSSSSSSFSSPSS) shows a compositional bias: low complexity. Residue Asn-203 is glycosylated (N-linked (GlcNAc...) asparagine).

The protein belongs to the heparin-binding growth factors family. In terms of assembly, interacts with FGFR1 and FGFR2. Interacts with FGFBP1. Preferentially expressed in the lung in adults.

It localises to the secreted. Plays an important role in the regulation of embryonic development, cell proliferation and cell differentiation. Required for normal branching morphogenesis. May play a role in wound healing. The sequence is that of Fibroblast growth factor 10 (Fgf10) from Rattus norvegicus (Rat).